The chain runs to 372 residues: B2 bradykinin receptor (372 aa).

The Extracellular segment spans residues 1 to 34; it reads MFNITSQVSALNATLAQGNSCLDAEWWSWLNTIQ. 2 N-linked (GlcNAc...) asparagine glycosylation sites follow: Asn-3 and Asn-12. Residues 35–58 form a helical membrane-spanning segment; sequence APFLWVLFVLAVLENIFVLSVFFL. At 59–67 the chain is on the cytoplasmic side; the sequence is HKSSCTVAE. The chain crosses the membrane as a helical span at residues 68–92; that stretch reads IYLGNLAVADLILAFGLPFWAITIA. Topologically, residues 93–105 are extracellular; sequence NNFDWLFGEVLCR. A disulfide bridge links Cys-104 with Cys-185. The chain crosses the membrane as a helical span at residues 106–127; the sequence is MVNTMIQMNMYSSICFLMLVSI. Topologically, residues 128 to 149 are cytoplasmic; that stretch reads DRYLALVKTMSMGRMRGVRWAK. Tyr-130 carries the post-translational modification Phosphotyrosine. The chain crosses the membrane as a helical span at residues 150–172; that stretch reads LYSLVIWGCALLLSSPMLVFRTM. Over 173 to 195 the chain is Extracellular; that stretch reads KDYRDEGHNVTACLIIYPSLTWQ. A glycan (N-linked (GlcNAc...) asparagine) is linked at Asn-181. Residues 196–222 form a helical membrane-spanning segment; sequence VFTNVLLNLVGFLLPLSIITFCTVQIM. Residues 223-241 lie on the Cytoplasmic side of the membrane; sequence QVLRNNEMQKFKEIQTERR. Residues 242 to 266 form a helical membrane-spanning segment; sequence ATVLVLAVLLLFVVCWLPFQIGTFL. The Extracellular segment spans residues 267-284; the sequence is DTLRLLGFLPGCWEHVID. A helical membrane pass occupies residues 285–308; the sequence is LITQISSYLAYSNSCLNPLVYVIV. Over 309-364 the chain is Cytoplasmic; the sequence is GKRFRKKSREVYHGLCRSGGCVSEPAQSENSMGTLRTSISVDRQIHKLQDWARSSS. Tyr-320 carries the post-translational modification Phosphotyrosine. Cys-324 carries the S-palmitoyl cysteine lipid modification. Position 339 is a phosphoserine (Ser-339). Thr-342 is subject to Phosphothreonine. 2 positions are modified to phosphoserine; by GRK6: Ser-346 and Ser-348.

The protein belongs to the G-protein coupled receptor 1 family. Bradykinin receptor subfamily. BDKRB2 sub-subfamily. As to quaternary structure, forms a complex with PECAM1 and GNAQ. Interacts with PECAM1.

It localises to the cell membrane. In terms of biological role, receptor for bradykinin. It is associated with G proteins that activate a phosphatidylinositol-calcium second messenger system. In Cavia porcellus (Guinea pig), this protein is B2 bradykinin receptor (BDKRB2).